Consider the following 378-residue polypeptide: Ribosomal RNA large subunit methyltransferase G (378 aa).

This sequence belongs to the methyltransferase superfamily. RlmG family.

The protein resides in the cytoplasm. The enzyme catalyses guanosine(1835) in 23S rRNA + S-adenosyl-L-methionine = N(2)-methylguanosine(1835) in 23S rRNA + S-adenosyl-L-homocysteine + H(+). In terms of biological role, specifically methylates the guanine in position 1835 (m2G1835) of 23S rRNA. The polypeptide is Ribosomal RNA large subunit methyltransferase G (Shewanella baltica (strain OS185)).